Consider the following 571-residue polypeptide: La-related protein 7 (571 aa).

M1 carries the post-translational modification N-acetylmethionine. Residues 1–17 (METENQKTMEESTEKRK) are compositionally biased toward basic and acidic residues. Disordered regions lie at residues 1-25 (METENQKTMEESTEKRKEEKKKRSR) and 181-366 (LNNP…ERHK). The HTH La-type RNA-binding domain occupies 23–117 (RSRVKQVLAD…KPLGERPKDE (95 aa)). The region spanning 120–198 (RTVYVELLPK…PRKPGIFPKT (79 aa)) is the RRM domain. Positions 214-223 (KKKKKKKGRI) are enriched in basic residues. K232 participates in a covalent cross-link: Glycyl lysine isopeptide (Lys-Gly) (interchain with G-Cter in SUMO2). At T252 the chain carries Phosphothreonine. Phosphoserine occurs at positions 254 and 257. T261 is modified (phosphothreonine). Over residues 287–296 (KAGKRERSSA) the composition is skewed to basic and acidic residues. Phosphoserine is present on residues S294, S295, and S335. T336 is subject to Phosphothreonine. Basic and acidic residues predominate over residues 342-351 (PGDRKGDSLS). Phosphoserine is present on S349. The segment covering 352-365 (KGKRKHKKKHKERH) has biased composition (basic residues). A Glycyl lysine isopeptide (Lys-Gly) (interchain with G-Cter in SUMO2) cross-link involves residue K408. Positions 411-432 (SEMETESKAPPGSGQQCSTQEK) are disordered. The segment covering 423–432 (SGQQCSTQEK) has biased composition (polar residues). Residues 439 to 552 (QFVTGVIVKI…TEKLITKAEK (114 aa)) enclose the xRRM domain.

This sequence belongs to the LARP7 family. As to quaternary structure, core component of the 7SK RNP complex, at least composed of 7SK RNA, LARP7, MEPCE, HEXIM1 (or HEXIM2) and P-TEFb (composed of CDK9 and CCNT1/cyclin-T1). Interacts with METTL16. Interacts with RBM7; upon genotoxic stress this interaction is enhanced, triggering the release of inactive P-TEFb complex from the core, yielding to P-TEFb complex activation. Associates with box C/D small nucleolar ribonucleoprotein (snoRNP) complexes.

The protein resides in the nucleus. It localises to the nucleoplasm. Its function is as follows. RNA-binding protein that specifically binds distinct small nuclear RNA (snRNAs) and regulates their processing and function. Specifically binds the 7SK snRNA (7SK RNA) and acts as a core component of the 7SK ribonucleoprotein (RNP) complex, thereby acting as a negative regulator of transcription elongation by RNA polymerase II. The 7SK RNP complex sequesters the positive transcription elongation factor b (P-TEFb) in a large inactive 7SK RNP complex preventing RNA polymerase II phosphorylation and subsequent transcriptional elongation. The 7SK RNP complex also promotes snRNA gene transcription by RNA polymerase II via interaction with the little elongation complex (LEC). LARP7 specifically binds to the highly conserved 3'-terminal U-rich stretch of 7SK RNA; on stimulation, remains associated with 7SK RNA, whereas P-TEFb is released from the complex. LARP7 also acts as a regulator of mRNA splicing fidelity by promoting U6 snRNA processing. Specifically binds U6 snRNAs and associates with a subset of box C/D RNP complexes: promotes U6 snRNA 2'-O-methylation by facilitating U6 snRNA loading into box C/D RNP complexes. U6 snRNA 2'-O-methylation is required for mRNA splicing fidelity. Binds U6 snRNAs with a 5'-CAGGG-3' sequence motif. U6 snRNA processing is required for spermatogenesis. The sequence is that of La-related protein 7 from Rattus norvegicus (Rat).